The chain runs to 239 residues: Pyridoxine 5'-phosphate synthase (239 aa).

Residue N7 coordinates 3-amino-2-oxopropyl phosphate. D9–H10 is a binding site for 1-deoxy-D-xylulose 5-phosphate. Residue R18 coordinates 3-amino-2-oxopropyl phosphate. H43 acts as the Proton acceptor in catalysis. 1-deoxy-D-xylulose 5-phosphate is bound by residues R45 and H50. E70 (proton acceptor) is an active-site residue. Residue T100 participates in 1-deoxy-D-xylulose 5-phosphate binding. Residue H191 is the Proton donor of the active site. Residues G192 and G213–H214 each bind 3-amino-2-oxopropyl phosphate.

This sequence belongs to the PNP synthase family. Homooctamer; tetramer of dimers.

It is found in the cytoplasm. The enzyme catalyses 3-amino-2-oxopropyl phosphate + 1-deoxy-D-xylulose 5-phosphate = pyridoxine 5'-phosphate + phosphate + 2 H2O + H(+). Its pathway is cofactor biosynthesis; pyridoxine 5'-phosphate biosynthesis; pyridoxine 5'-phosphate from D-erythrose 4-phosphate: step 5/5. In terms of biological role, catalyzes the complicated ring closure reaction between the two acyclic compounds 1-deoxy-D-xylulose-5-phosphate (DXP) and 3-amino-2-oxopropyl phosphate (1-amino-acetone-3-phosphate or AAP) to form pyridoxine 5'-phosphate (PNP) and inorganic phosphate. This Trichormus variabilis (strain ATCC 29413 / PCC 7937) (Anabaena variabilis) protein is Pyridoxine 5'-phosphate synthase.